An 89-amino-acid chain; its full sequence is Endoribonuclease VapD 1 (89 aa).

It belongs to the VapD ribonuclease family. As to quaternary structure, homodimer.

In terms of biological role, cleaves ssRNA, mostly between U:A. In Riemerella anatipestifer (Moraxella anatipestifer), this protein is Endoribonuclease VapD 1.